A 683-amino-acid chain; its full sequence is Rhophilin-2-A (683 aa).

An REM-1 domain is found at 25 to 99 (KSIAQTGRSK…LERLNISVEV (75 aa)). Positions 110–501 (PLIPLGLKET…TDIFQRLGPL (392 aa)) constitute a BRO1 domain. Residues 515–592 (KICITKEDGD…QSIEIQVISI (78 aa)) enclose the PDZ domain.

Belongs to the RHPN family. In terms of assembly, interacts with RhoA.

It localises to the cytoplasm. It is found in the perinuclear region. Functionally, binds specifically to GTP-Rho. This is Rhophilin-2-A (rhpn2-a) from Xenopus laevis (African clawed frog).